Here is a 367-residue protein sequence, read N- to C-terminus: Phosphoribosylaminoimidazole-succinocarboxamide synthase (367 aa).

The protein belongs to the SAICAR synthetase family.

The enzyme catalyses 5-amino-1-(5-phospho-D-ribosyl)imidazole-4-carboxylate + L-aspartate + ATP = (2S)-2-[5-amino-1-(5-phospho-beta-D-ribosyl)imidazole-4-carboxamido]succinate + ADP + phosphate + 2 H(+). The protein operates within purine metabolism; IMP biosynthesis via de novo pathway; 5-amino-1-(5-phospho-D-ribosyl)imidazole-4-carboxamide from 5-amino-1-(5-phospho-D-ribosyl)imidazole-4-carboxylate: step 1/2. The chain is Phosphoribosylaminoimidazole-succinocarboxamide synthase from Shewanella frigidimarina (strain NCIMB 400).